The sequence spans 124 residues: UPF0357 protein C1687.07 (124 aa).

The signal sequence occupies residues 1 to 24; it reads MASFHIIVSYVTVVLAIIIAITFA.

Belongs to the UPF0357 family.

The sequence is that of UPF0357 protein C1687.07 from Schizosaccharomyces pombe (strain 972 / ATCC 24843) (Fission yeast).